A 413-amino-acid polypeptide reads, in one-letter code: Protein PHR1-LIKE 1 (413 aa).

Disordered regions lie at residues 171-196 (SEPNWSELLGDSSSHNPNSEIPTPFL) and 208-233 (QQQMVSSEDQLSGRNSSSSVATSKQR). 2 stretches are compositionally biased toward polar residues: residues 181-191 (DSSSHNPNSEI) and 208-231 (QQQMVSSEDQLSGRNSSSSVATSK). The HTH myb-type domain occupies 228–288 (ATSKQRMRWT…HLQKYRTARY (61 aa)). The segment at residues 259-284 (PKAVLKLLNNPGLTIYHVKSHLQKYR) is a DNA-binding region (H-T-H motif). Residues 322 to 342 (TQALRLQMEVQKRLHEQLEIQ) form a coiled coil region. The LHEQLE signature appears at 335–340 (LHEQLE). Positions 363–413 (QQKIQDNKSSSSEASPKQCNGSFAEVEVGLETLTGDQNESASASRKRVRED) are disordered. Polar residues-rich tracts occupy residues 369-383 (NKSSSSEASPKQCNG) and 396-405 (TGDQNESASA).

The protein belongs to the MYB-CC family. In terms of assembly, homodimers and heterodimers. Interacts with MED25. Does not interact with PHL2 or PHL3. In terms of tissue distribution, expressed in shoots and roots.

It is found in the nucleus. In terms of biological role, transcription factor acting as central integrator of phosphate starvation responses. Regulates FER1 expression upon phosphate starvation, linking iron and phosphate homeostasis. In Arabidopsis thaliana (Mouse-ear cress), this protein is Protein PHR1-LIKE 1 (PHL1).